A 308-amino-acid polypeptide reads, in one-letter code: UPF0282 protein M1425_2116 (308 aa).

It belongs to the UPF0282 family.

This is UPF0282 protein M1425_2116 from Saccharolobus islandicus (strain M.14.25 / Kamchatka #1) (Sulfolobus islandicus).